The following is a 174-amino-acid chain: UPF0316 protein Dhaf_3052 (174 aa).

3 consecutive transmembrane segments (helical) span residues 4–24 (ILQFVLIIITINITYVTLTTI), 35–55 (VYASLLSVLEVFIYIMGLSII), and 59–79 (LDSYWNIAAYCCGYGVGVYLG).

Belongs to the UPF0316 family.

Its subcellular location is the cell membrane. This chain is UPF0316 protein Dhaf_3052, found in Desulfitobacterium hafniense (strain DSM 10664 / DCB-2).